Consider the following 198-residue polypeptide: Small ribosomal subunit protein uS4 (198 aa).

A disordered region spans residues 26-45; it reads LKKRPYAPGQHGQRRSKLSN. The S4 RNA-binding domain occupies 91 to 154; that stretch reads SRLDNVVYRL…KNLTIVKEAL (64 aa).

Belongs to the universal ribosomal protein uS4 family. In terms of assembly, part of the 30S ribosomal subunit. Contacts protein S5. The interaction surface between S4 and S5 is involved in control of translational fidelity.

One of the primary rRNA binding proteins, it binds directly to 16S rRNA where it nucleates assembly of the body of the 30S subunit. In terms of biological role, with S5 and S12 plays an important role in translational accuracy. The polypeptide is Small ribosomal subunit protein uS4 (Acholeplasma laidlawii (strain PG-8A)).